We begin with the raw amino-acid sequence, 273 residues long: LOB domain-containing protein 20 (273 aa).

Residues 1 to 15 (MADQQRGHNTSDSRR) show a composition bias toward basic and acidic residues. Residues 1 to 39 (MADQQRGHNTSDSRRKSLAGKRTSQQTPTSSLSSGGVSM) form a disordered region. Positions 23 to 39 (TSQQTPTSSLSSGGVSM) are enriched in low complexity. The 103-residue stretch at 50-152 (SPCGACKFLR…AELSVVQSQL (103 aa)) folds into the LOB domain. The disordered stretch occupies residues 221-248 (LEHSLQPMPPHQQRRGDYQHEDEEESGA).

It belongs to the LOB domain-containing protein family. In terms of tissue distribution, expressed in roots and flowers.

The sequence is that of LOB domain-containing protein 20 (LBD20) from Arabidopsis thaliana (Mouse-ear cress).